The following is a 391-amino-acid chain: Succinate--CoA ligase [ADP-forming] subunit beta (391 aa).

Residues lysine 9–glutamate 248 enclose the ATP-grasp domain. ATP is bound by residues lysine 50, glycine 57–glycine 59, glutamate 103, methionine 106, and glutamate 111. Residues asparagine 203 and aspartate 217 each contribute to the Mg(2+) site. Substrate is bound by residues asparagine 268 and glycine 325–valine 327.

Belongs to the succinate/malate CoA ligase beta subunit family. Heterotetramer of two alpha and two beta subunits. Mg(2+) serves as cofactor.

The enzyme catalyses succinate + ATP + CoA = succinyl-CoA + ADP + phosphate. It catalyses the reaction GTP + succinate + CoA = succinyl-CoA + GDP + phosphate. It functions in the pathway carbohydrate metabolism; tricarboxylic acid cycle; succinate from succinyl-CoA (ligase route): step 1/1. Functionally, succinyl-CoA synthetase functions in the citric acid cycle (TCA), coupling the hydrolysis of succinyl-CoA to the synthesis of either ATP or GTP and thus represents the only step of substrate-level phosphorylation in the TCA. The beta subunit provides nucleotide specificity of the enzyme and binds the substrate succinate, while the binding sites for coenzyme A and phosphate are found in the alpha subunit. This Chlorobium phaeovibrioides (strain DSM 265 / 1930) (Prosthecochloris vibrioformis (strain DSM 265)) protein is Succinate--CoA ligase [ADP-forming] subunit beta.